Reading from the N-terminus, the 308-residue chain is HTH-type transcriptional regulator YtlI (308 aa).

The 57-residue stretch at 1 to 57 (MELRSIKTFHTIVKFGSFYKAAEILNYSQPTISMRMKQLEQDLGVLLFERGKSLQLT) folds into the HTH lysR-type domain. Residues 18–37 (FYKAAEILNYSQPTISMRMK) constitute a DNA-binding region (H-T-H motif).

The protein belongs to the LysR transcriptional regulatory family.

Functionally, positively regulates the expression of ytmI operon in response to the availability of sulfur sources. This Bacillus subtilis (strain 168) protein is HTH-type transcriptional regulator YtlI (ytlI).